Consider the following 216-residue polypeptide: Transmembrane emp24 domain-containing protein eca (216 aa).

The signal sequence occupies residues 1 to 20 (MRDQWICLALVLCALHSACG). Residues 21-183 (LYFHISETER…RHTSESTNSR (163 aa)) are Lumenal-facing. Positions 30-126 (RKCFIEEVPD…QLRVHLDIQV (97 aa)) constitute a GOLD domain. Residues 134–164 (ANVAQKEKLTELQLRIRQLLDQVEQITKEQN) are a coiled coil. Residues 184–203 (VLWWSLAQTVVLVCMGFWQM) traverse the membrane as a helical segment. Residues 204 to 216 (RHLKSFFEAKKLV) are Cytoplasmic-facing. The Prevents secretion from ER signature appears at 213–216 (KKLV).

It belongs to the EMP24/GP25L family.

Its subcellular location is the endoplasmic reticulum membrane. Its function is as follows. Eca and bai are essential, though not redundant, for dorsoventral patterning of the embryo. Specifically required during early embryogenesis for the activity of maternal tkv, while the zygotic tkv is not affected. The protein is Transmembrane emp24 domain-containing protein eca of Drosophila mojavensis (Fruit fly).